Here is a 211-residue protein sequence, read N- to C-terminus: DNA/RNA-binding protein ALBA2 (211 aa).

The span at 84–99 (NSGLKKNAKNEDKKSG) shows a compositional bias: basic and acidic residues. Residues 84 to 121 (NSGLKKNAKNEDKKSGDEEEEEEEEEEDEENNKNKEAN) are disordered. A compositionally biased stretch (acidic residues) spans 100–113 (DEEEEEEEEEEDEE).

This sequence belongs to the histone-like Alba family. In terms of assembly, identified in a TARE6-associated complex consisting of over 30 proteins and including ALBA1, ALBA2 and ALBA4; the complex binds to the non-coding subtelomeric repeat region TARE6.

It is found in the nucleus. Its subcellular location is the chromosome. It localises to the telomere. The protein resides in the cytoplasm. Possesses DNA- and RNA-binding activities. Binds to DNA with relaxed sequence specificity. Associates with the subtelomeric TARE6 repeats. The sequence is that of DNA/RNA-binding protein ALBA2 from Plasmodium falciparum (isolate 3D7).